The chain runs to 184 residues: Ribulose bisphosphate carboxylase small subunit, chloroplastic 5 (184 aa).

The N-terminal 43 residues, 1–43 (MAAAMMNKTIVVSKDGCARSSSIPKVATNKMGFASAVAMKKSR), are a transit peptide targeting the chloroplast.

The protein belongs to the RuBisCO small chain family. As to quaternary structure, heterohexadecamer of 8 large and 8 small subunits.

Its subcellular location is the plastid. The protein resides in the chloroplast. In terms of biological role, ruBisCO catalyzes two reactions: the carboxylation of D-ribulose 1,5-bisphosphate, the primary event in carbon dioxide fixation, as well as the oxidative fragmentation of the pentose substrate. Both reactions occur simultaneously and in competition at the same active site. Although the small subunit is not catalytic it is essential for maximal activity. This Acetabularia peniculus (Green alga) protein is Ribulose bisphosphate carboxylase small subunit, chloroplastic 5.